A 150-amino-acid polypeptide reads, in one-letter code: Cytochrome c oxidase subunit 5A, mitochondrial (150 aa).

Residues 1–41 constitute a mitochondrion transit peptide; it reads MLGAALRRCAVAATAWAGPRGLLHSAPTPGPAAAIHSVRCY. Residues 2–17 carry the SIFI-degron motif; the sequence is LGAALRRCAVAATAWA. N6-acetyllysine occurs at positions 87 and 113. Thr141 is modified (phosphothreonine).

Belongs to the cytochrome c oxidase subunit 5A family. Component of the cytochrome c oxidase (complex IV, CIV), a multisubunit enzyme composed of 14 subunits. The complex is composed of a catalytic core of 3 subunits MT-CO1, MT-CO2 and MT-CO3, encoded in the mitochondrial DNA, and 11 supernumerary subunits COX4I, COX5A, COX5B, COX6A, COX6B, COX6C, COX7A, COX7B, COX7C, COX8 and NDUFA4, which are encoded in the nuclear genome. The complex exists as a monomer or a dimer and forms supercomplexes (SCs) in the inner mitochondrial membrane with NADH-ubiquinone oxidoreductase (complex I, CI) and ubiquinol-cytochrome c oxidoreductase (cytochrome b-c1 complex, complex III, CIII), resulting in different assemblies (supercomplex SCI(1)III(2)IV(1) and megacomplex MCI(2)III(2)IV(2)). Interacts with AFG1L. Interacts with RAB5IF. In response to mitochondrial stress, the precursor protein is ubiquitinated by the SIFI complex in the cytoplasm before mitochondrial import, leading to its degradation. Within the SIFI complex, UBR4 initiates ubiquitin chain that are further elongated or branched by KCMF1.

It localises to the mitochondrion inner membrane. It participates in energy metabolism; oxidative phosphorylation. In terms of biological role, component of the cytochrome c oxidase, the last enzyme in the mitochondrial electron transport chain which drives oxidative phosphorylation. The respiratory chain contains 3 multisubunit complexes succinate dehydrogenase (complex II, CII), ubiquinol-cytochrome c oxidoreductase (cytochrome b-c1 complex, complex III, CIII) and cytochrome c oxidase (complex IV, CIV), that cooperate to transfer electrons derived from NADH and succinate to molecular oxygen, creating an electrochemical gradient over the inner membrane that drives transmembrane transport and the ATP synthase. Cytochrome c oxidase is the component of the respiratory chain that catalyzes the reduction of oxygen to water. Electrons originating from reduced cytochrome c in the intermembrane space (IMS) are transferred via the dinuclear copper A center (CU(A)) of subunit 2 and heme A of subunit 1 to the active site in subunit 1, a binuclear center (BNC) formed by heme A3 and copper B (CU(B)). The BNC reduces molecular oxygen to 2 water molecules using 4 electrons from cytochrome c in the IMS and 4 protons from the mitochondrial matrix. In Saimiri sciureus (Common squirrel monkey), this protein is Cytochrome c oxidase subunit 5A, mitochondrial (COX5A).